The sequence spans 542 residues: 3-(3-hydroxy-phenyl)propionate/3-hydroxycinnamic acid hydroxylase (542 aa).

Residues 10–39 (SVAI…VVER) and 278–288 (FVAGRVALIGD) contribute to the FAD site.

This sequence belongs to the PheA/TfdB FAD monooxygenase family. The cofactor is FAD.

It carries out the reaction 3-(3-hydroxyphenyl)propanoate + NADH + O2 + H(+) = 3-(2,3-dihydroxyphenyl)propanoate + NAD(+) + H2O. It catalyses the reaction (2E)-3-(3-hydroxyphenyl)prop-2-enoate + NADH + O2 + H(+) = (2E)-3-(2,3-dihydroxyphenyl)prop-2-enoate + NAD(+) + H2O. It participates in aromatic compound metabolism; 3-phenylpropanoate degradation. Catalyzes the insertion of one atom of molecular oxygen into position 2 of the phenyl ring of 3-(3-hydroxyphenyl)propionate (3-HPP) and hydroxycinnamic acid (3HCI). The protein is 3-(3-hydroxy-phenyl)propionate/3-hydroxycinnamic acid hydroxylase of Burkholderia cenocepacia (strain HI2424).